The chain runs to 222 residues: GMP/IMP nucleotidase YrfG (222 aa).

Aspartate 9 (nucleophile) is an active-site residue. Residues aspartate 9 and aspartate 11 each contribute to the Mg(2+) site. Residues 9-11 (DVD) and lysine 149 each bind substrate. Position 174 (aspartate 174) interacts with Mg(2+).

The protein belongs to the HAD-like hydrolase superfamily. Mg(2+) serves as cofactor. The cofactor is Mn(2+). It depends on Co(2+) as a cofactor. Requires Zn(2+) as cofactor.

The catalysed reaction is a ribonucleoside 5'-phosphate + H2O = a ribonucleoside + phosphate. Functionally, catalyzes the dephosphorylation of different purine nucleotides (GMP and IMP). Also hydrolyzes flavin mononucleotide (FMN). This chain is GMP/IMP nucleotidase YrfG (yrfG), found in Escherichia coli (strain K12).